The sequence spans 487 residues: Calcium-dependent mitochondrial ATP-magnesium/phosphate carrier protein 2 (487 aa).

Over 1–211 (MEATKSSKQN…ISKHIKRSNY (211 aa)) the chain is Mitochondrial intermembrane. 4 EF-hand domains span residues 36–71 (ERDL…LQIP), 72–107 (SGYK…KELE), 108–138 (LYRI…AGIE), and 139–174 (IKDE…YPHE). The Ca(2+) site is built by Asp85, Asn87, Asp89, Arg91, and Glu96. Ca(2+)-binding residues include Asp152, Asp154, Asp156, and Glu163. Solcar repeat units follow at residues 206 to 289 (IKRS…FKNA), 301 to 389 (IGTT…LKDL), and 400 to 483 (PGPL…MKKS). The helical transmembrane segment at 212 to 229 (FIAGGIAGAASRTATAPL) threads the bilayer. Over 230-263 (DRLKVLLQIQKTDARIREAIKLIWKQGGVRGFFR) the chain is Mitochondrial matrix. Residues 264–283 (GNGLNIVKVAPESAIKFYAY) traverse the membrane as a helical segment. Topologically, residues 284–310 (ELFKNAIGENMGEDKADIGTTVRLFAG) are mitochondrial intermembrane. The helical transmembrane segment at 311–324 (GMAGAVAQASIYPL) threads the bilayer. Topologically, residues 325 to 363 (DLVKTRLQTYTSQAGVAVPRLGTLTKDILVHEGPRAFYK) are mitochondrial matrix. A helical transmembrane segment spans residues 364 to 383 (GLFPSLLGIIPYAGIDLAAY). Residues 384–405 (ETLKDLSRTYILQDAEPGPLVQ) lie on the Mitochondrial intermembrane side of the membrane. The helical transmembrane segment at 406 to 423 (LGCGTISGALGATCVYPL) threads the bilayer. Residues 424–457 (QVVRTRMQAERARTSMSGVFRRTISEEGYRALYK) lie on the Mitochondrial matrix side of the membrane. The chain crosses the membrane as a helical span at residues 458–477 (GLLPNLLKVVPAASITYMVY). Over 478–487 (EAMKKSLELD) the chain is Mitochondrial intermembrane.

It belongs to the mitochondrial carrier (TC 2.A.29) family. In terms of tissue distribution, expressed in flowers, leaves, stems, roots and seedlings, mostly in aerial parts.

The protein resides in the mitochondrion inner membrane. Counter-exchange transport activity is saturable and inhibited by pyridoxal-5'-phosphate, EDTA and EGTA. Activated by calcium Ca(2+) and manganese Mn(2+) ions, and slightly by iron Fe(2+) and zinc Zn(2+) ions. Repressed by copper ions Cu(2+) and slightly by magnesium Mg(2+) ions. Magnesium Mg(2+) ions promotes slightly ATP uptake, ATP-Mg(2+) being exchanged with ATP(4-). Calcium-dependent mitochondrial carrier protein that catalyzes the import of ATP co-transported with metal divalent cations across the mitochondrial inner membrane in exchange for phosphate (Pi). Can transport phosphate, AMP, ADP, ATP, adenosine 5'-phosphosulfate, sulfate and thiosulfate, and, to a lesser extent, other nucleotides. Binds calcium ions Ca(2+). Also mediates calcium uptake. This Arabidopsis thaliana (Mouse-ear cress) protein is Calcium-dependent mitochondrial ATP-magnesium/phosphate carrier protein 2.